A 182-amino-acid chain; its full sequence is uncharacterized protein (182 aa).

2 disordered regions span residues 17 to 53 and 128 to 159; these read AVSQAQGRPGHPDAPPNIYEGGLGSPQPQCPSAQGSK and DSLGSSASSSSMDPDKGALPQPSPSRLRPKRS. Residues 42–53 are compositionally biased toward polar residues; that stretch reads PQPQCPSAQGSK. The segment covering 129–138 has biased composition (low complexity); the sequence is SLGSSASSSS.

This is an uncharacterized protein from Homo sapiens (Human).